A 149-amino-acid chain; its full sequence is Deoxyuridine 5'-triphosphate nucleotidohydrolase (149 aa).

Substrate contacts are provided by residues R70 to G72, N83, and L87 to D89.

This sequence belongs to the dUTPase family. The cofactor is Mg(2+).

It catalyses the reaction dUTP + H2O = dUMP + diphosphate + H(+). It participates in pyrimidine metabolism; dUMP biosynthesis; dUMP from dCTP (dUTP route): step 2/2. This enzyme is involved in nucleotide metabolism: it produces dUMP, the immediate precursor of thymidine nucleotides and it decreases the intracellular concentration of dUTP so that uracil cannot be incorporated into DNA. The chain is Deoxyuridine 5'-triphosphate nucleotidohydrolase from Blochmanniella pennsylvanica (strain BPEN).